A 185-amino-acid chain; its full sequence is Ribosome-recycling factor (185 aa).

Belongs to the RRF family.

It is found in the cytoplasm. In terms of biological role, responsible for the release of ribosomes from messenger RNA at the termination of protein biosynthesis. May increase the efficiency of translation by recycling ribosomes from one round of translation to another. The polypeptide is Ribosome-recycling factor (Thermosipho africanus (strain TCF52B)).